The following is a 102-amino-acid chain: Protein translation factor SUI1 homolog (102 aa).

The protein belongs to the SUI1 family.

The protein is Protein translation factor SUI1 homolog of Methanococcus maripaludis (strain C5 / ATCC BAA-1333).